The following is a 621-amino-acid chain: Laccase-2 (621 aa).

A signal peptide spans 1 to 23 (MMKSFFSAAALLLGLVAPSAVLA). A propeptide spanning residues 24-48 (APSLPGVPREVTRDLLRPVEERQSS) is cleaved from the precursor. A disulfide bridge connects residues Cys49 and Cys57. 2 Plastocyanin-like domains span residues 78-201 (TRTY…IVVN) and 210-367 (IDLG…LPTN). Asn133 is a glycosylation site (N-linked (GlcNAc...) asparagine). Cu cation-binding residues include His138, His140, His183, and His185. 2 disulfides stabilise this stretch: Cys159-Cys586 and Cys343-Cys377. Asn261, Asn276, Asn289, Asn325, and Asn334 each carry an N-linked (GlcNAc...) asparagine glycan. Asn401, Asn421, and Asn441 each carry an N-linked (GlcNAc...) asparagine glycan. Positions 430–566 (DKPIVDYVIA…GGLSVQYLER (137 aa)) constitute a Plastocyanin-like 3 domain. The Cu cation site is built by His476, His479, His481, His548, Cys549, His550, and His554. Positions 606 to 621 (KVKKWVGEHPDWYIKN) are excised as a propeptide.

It belongs to the multicopper oxidase family. In terms of assembly, monomer. Cu cation serves as cofactor. In terms of processing, proteolytically processed at both its N-terminus and its C-terminus.

The protein localises to the secreted. It carries out the reaction 4 hydroquinone + O2 = 4 benzosemiquinone + 2 H2O. Functionally, probably involved in lignin degradation and in the detoxification of lignin-derived products in its natural habitat (herbivorous dung), which is rich in lignin of grasses and straw. Probably involved in melanin synthesis and in perithecia development. This is Laccase-2 (LAC2) from Podospora anserina (Pleurage anserina).